Here is a 318-residue protein sequence, read N- to C-terminus: Olfactory receptor 5G26 (318 aa).

The Extracellular segment spans residues M1–F28. N5 carries N-linked (GlcNAc...) asparagine glycosylation. Residues L29 to I49 form a helical membrane-spanning segment. Residues H50–H56 are Cytoplasmic-facing. Residues I57–I77 traverse the membrane as a helical segment. The Extracellular segment spans residues S78–S93. Residues F94–L114 traverse the membrane as a helical segment. Residues C97 and C189 are joined by a disulfide bond. Residues L115–L144 are Cytoplasmic-facing. The chain crosses the membrane as a helical span at residues V145 to V165. Topologically, residues L166–L198 are extracellular. A helical transmembrane segment spans residues L199–V219. The Cytoplasmic portion of the chain corresponds to Y220–S239. Residues T240–V260 traverse the membrane as a helical segment. At R261–N271 the chain is on the extracellular side. The chain crosses the membrane as a helical span at residues K272 to L292. Residues R293–L318 lie on the Cytoplasmic side of the membrane.

This sequence belongs to the G-protein coupled receptor 1 family.

It is found in the cell membrane. Potential odorant receptor. This chain is Olfactory receptor 5G26, found in Mus musculus (Mouse).